The sequence spans 142 residues: Large ribosomal subunit protein uL13 (142 aa).

It belongs to the universal ribosomal protein uL13 family. In terms of assembly, part of the 50S ribosomal subunit.

This protein is one of the early assembly proteins of the 50S ribosomal subunit, although it is not seen to bind rRNA by itself. It is important during the early stages of 50S assembly. This Yersinia enterocolitica serotype O:8 / biotype 1B (strain NCTC 13174 / 8081) protein is Large ribosomal subunit protein uL13.